A 342-amino-acid chain; its full sequence is tRNA-specific 2-thiouridylase MnmA (342 aa).

Residues 6–13 and Leu-32 contribute to the ATP site; that span reads LLSGGVDS. Cys-92 (nucleophile) is an active-site residue. Cys-92 and Cys-191 are joined by a disulfide. ATP is bound at residue Gly-116. The interaction with tRNA stretch occupies residues 138–140; it reads KDQ. Residue Cys-191 is the Cysteine persulfide intermediate of the active site. An interaction with tRNA region spans residues 293–294; the sequence is RY.

It belongs to the MnmA/TRMU family.

It localises to the cytoplasm. The enzyme catalyses S-sulfanyl-L-cysteinyl-[protein] + uridine(34) in tRNA + AH2 + ATP = 2-thiouridine(34) in tRNA + L-cysteinyl-[protein] + A + AMP + diphosphate + H(+). In terms of biological role, catalyzes the 2-thiolation of uridine at the wobble position (U34) of tRNA, leading to the formation of s(2)U34. This Helicobacter pylori (strain ATCC 700392 / 26695) (Campylobacter pylori) protein is tRNA-specific 2-thiouridylase MnmA.